A 65-amino-acid polypeptide reads, in one-letter code: DNA-directed RNA polymerase subunit Rpo10 (65 aa).

Cysteine 7, cysteine 10, cysteine 44, and cysteine 45 together coordinate Zn(2+).

It belongs to the archaeal Rpo10/eukaryotic RPB10 RNA polymerase subunit family. In terms of assembly, part of the RNA polymerase complex. It depends on Zn(2+) as a cofactor.

Its subcellular location is the cytoplasm. The catalysed reaction is RNA(n) + a ribonucleoside 5'-triphosphate = RNA(n+1) + diphosphate. Its function is as follows. DNA-dependent RNA polymerase (RNAP) catalyzes the transcription of DNA into RNA using the four ribonucleoside triphosphates as substrates. In Pyrococcus furiosus (strain ATCC 43587 / DSM 3638 / JCM 8422 / Vc1), this protein is DNA-directed RNA polymerase subunit Rpo10.